Reading from the N-terminus, the 171-residue chain is MDVQERRFSCAAVGASLKVPAIAAGAAFFLSIATAAVARNARVYVSVARATVLALGAGVTAYALRALLAYVVPDLLVQEDGKMPIPHVDLTLDDVVEPSFASPGGDVVQETDDSFDSLIPTGELGELGYSFSPSTPSFEDKTSDLVGDVLTDLPETKRMARAIRTVLSQDT.

A run of 2 helical transmembrane segments spans residues 13–35 and 50–72; these read VGAS…IATA and ATVL…AYVV.

Its subcellular location is the cell membrane. This is an uncharacterized protein from Treponema pallidum (strain Nichols).